We begin with the raw amino-acid sequence, 702 residues long: Ribosomal RNA large subunit methyltransferase K/L (702 aa).

The THUMP domain maps to leucine 43–leucine 154.

This sequence belongs to the methyltransferase superfamily. RlmKL family.

Its subcellular location is the cytoplasm. It carries out the reaction guanosine(2445) in 23S rRNA + S-adenosyl-L-methionine = N(2)-methylguanosine(2445) in 23S rRNA + S-adenosyl-L-homocysteine + H(+). It catalyses the reaction guanosine(2069) in 23S rRNA + S-adenosyl-L-methionine = N(2)-methylguanosine(2069) in 23S rRNA + S-adenosyl-L-homocysteine + H(+). Functionally, specifically methylates the guanine in position 2445 (m2G2445) and the guanine in position 2069 (m7G2069) of 23S rRNA. In Escherichia coli O157:H7, this protein is Ribosomal RNA large subunit methyltransferase K/L.